Reading from the N-terminus, the 247-residue chain is Granzyme B (247 aa).

The signal sequence occupies residues 1-18 (MQPILLLLAFLLLPRADA). A propeptide spans 19-20 (GE) (activation peptide). Positions 21-245 (IIGGHEAKPH…FVHWIKKTMK (225 aa)) constitute a Peptidase S1 domain. Cysteines 49 and 65 form a disulfide. The active-site Charge relay system is the histidine 64. 2 N-linked (GlcNAc...) asparagine glycosylation sites follow: asparagine 71 and asparagine 104. Aspartate 108 functions as the Charge relay system in the catalytic mechanism. Cystine bridges form between cysteine 142–cysteine 209 and cysteine 173–cysteine 188. Serine 203 acts as the Charge relay system in catalysis.

This sequence belongs to the peptidase S1 family. Granzyme subfamily.

The protein resides in the secreted. It localises to the cytolytic granule. The catalysed reaction is Preferential cleavage: -Asp-|-Xaa- &gt;&gt; -Asn-|-Xaa- &gt; -Met-|-Xaa-, -Ser-|-Xaa-.. Inactivated by the serine protease inhibitor diisopropylfluorophosphate. Its function is as follows. Abundant protease in the cytosolic granules of cytotoxic T-cells and NK-cells which activates caspase-independent pyroptosis when delivered into the target cell through the immunological synapse. It cleaves after Asp. Once delivered into the target cell, acts by catalyzing cleavage of gasdermin-E (GSDME), releasing the pore-forming moiety of GSDME, thereby triggering pyroptosis and target cell death. Seems to be linked to an activation cascade of caspases (aspartate-specific cysteine proteases) responsible for apoptosis execution. Cleaves caspase-3, -9 and -10 (CASP3, CASP9 and CASP10, respectively) to give rise to active enzymes mediating apoptosis. Cleaves and activates CASP7 in response to bacterial infection, promoting plasma membrane repair. The protein is Granzyme B of Homo sapiens (Human).